A 109-amino-acid polypeptide reads, in one-letter code: Nucleoid-associated protein plu3840 (109 aa).

Disordered stretches follow at residues 1–23 (MFGK…KMQK) and 89–109 (KEKM…KMPF).

Belongs to the YbaB/EbfC family. As to quaternary structure, homodimer.

The protein localises to the cytoplasm. The protein resides in the nucleoid. Binds to DNA and alters its conformation. May be involved in regulation of gene expression, nucleoid organization and DNA protection. The sequence is that of Nucleoid-associated protein plu3840 from Photorhabdus laumondii subsp. laumondii (strain DSM 15139 / CIP 105565 / TT01) (Photorhabdus luminescens subsp. laumondii).